A 560-amino-acid chain; its full sequence is Calnexin homolog (560 aa).

The N-terminal stretch at 1-22 is a signal peptide; it reads MKYGKVSFLALLCSLYVRGSLA. Over 23-489 the chain is Lumenal; the sequence is DPESEQEPLV…ETIIETPEIG (467 aa). Cys-132 and Cys-163 are oxidised to a cystine. Residues Tyr-136, Lys-138, Tyr-154, and Asp-161 each contribute to the an alpha-D-glucoside site. A p domain (Extended arm) region spans residues 242–375; that stretch reads IYDPEDIKPA…RKIPNPDYFD (134 aa). 5 consecutive repeat copies span residues 244–255, 261–272, 280–291, 299–310, and 314–324. 4 X approximate repeats stretches follow at residues 244 to 310 and 314 to 371; these read DPED…DWDD and GDWI…IPNP. Residues 253 to 273 form a disordered region; that stretch reads WVDEPEIPDPNAVKPDDWDED. Cys-326 and Cys-332 form a disulfide bridge. 3 consecutive repeat copies span residues 333-343, 347-357, and 361-371. Glu-391 contacts an alpha-D-glucoside. Asn-418 carries N-linked (GlcNAc...) asparagine glycosylation. The chain crosses the membrane as a helical span at residues 490–512; it reads IAIVAVLGSLTAVILTCYFYFFA. Topologically, residues 513 to 560 are cytoplasmic; that stretch reads SSSPASLSTGTTEAEKEQQEKFKQETETEKIDVSYAPETESPTAKNED. Positions 517–560 are disordered; it reads ASLSTGTTEAEKEQQEKFKQETETEKIDVSYAPETESPTAKNED. The span at 525–544 shows a compositional bias: basic and acidic residues; that stretch reads EAEKEQQEKFKQETETEKID. At Thr-551 the chain carries Phosphothreonine. Position 553 is a phosphoserine (Ser-553). A Phosphothreonine modification is found at Thr-555.

Belongs to the calreticulin family.

It is found in the endoplasmic reticulum membrane. Its function is as follows. Calcium-binding protein that interacts with newly synthesized monoglucosylated glycoproteins in the endoplasmic reticulum. It may act in assisting protein assembly and/or in the retention within the ER of unassembled protein subunits. It seems to play a major role in the quality control apparatus of the ER by the retention of incorrectly folded proteins. The chain is Calnexin homolog (cal1) from Schizosaccharomyces pombe (strain 972 / ATCC 24843) (Fission yeast).